A 225-amino-acid chain; its full sequence is Membrane protein (225 aa).

Topologically, residues 1–20 are virion surface; that stretch reads MSNETNCTLDFEQSVQLFKE. N-linked (GlcNAc...) asparagine; by host glycans are attached at residues Asn-3 and Asn-6. The helical transmembrane segment at 21–41 threads the bilayer; sequence YNLFITAFLLFLTIILQYGYA. Residues 42 to 51 lie on the Intravirion side of the membrane; the sequence is TRSKVIYTLK. A helical membrane pass occupies residues 52-72; sequence MIVLWCFWPLNIAVGVISCIY. The Virion surface segment spans residues 73–77; that stretch reads PPNTG. A helical membrane pass occupies residues 78 to 98; sequence GLVAAIILTVFACLSFVGYWI. Residues 99-225 lie on the Intravirion side of the membrane; that stretch reads QSIRLFKRCR…VATGGSSLYT (127 aa).

Belongs to the gammacoronaviruses M protein family. In terms of assembly, homomultimer. Interacts with envelope E protein in the budding compartment of the host cell, which is located between endoplasmic reticulum and the Golgi complex. Forms a complex with HE and S proteins. Interacts with nucleocapsid N protein. This interaction probably participates in RNA packaging into the virus.

The protein resides in the virion membrane. Its subcellular location is the host Golgi apparatus membrane. Functionally, component of the viral envelope that plays a central role in virus morphogenesis and assembly via its interactions with other viral proteins. This chain is Membrane protein, found in Gallus gallus (Chicken).